A 24-amino-acid chain; its full sequence is U1-plectoxin-Pt1e (24 aa).

A disulfide bond links Cys4 and Cys18.

It belongs to the neurotoxin 02 (plectoxin) family. 02 (plectoxin) subfamily. Contains 5 disulfide bonds. Expressed by the venom gland.

It is found in the secreted. Functionally, potent toxin that may paralyze and/or kill insect pests such as H.virescens (lepidoptera), S.exigua (beet armyworm) and M.sexta (tobacco hornworm). The sequence is that of U1-plectoxin-Pt1e from Plectreurys tristis (Spider).